Here is a 260-residue protein sequence, read N- to C-terminus: Diphthine synthase (260 aa).

S-adenosyl-L-methionine contacts are provided by residues leucine 9, aspartate 85, isoleucine 88, 113–114 (TA), leucine 168, alanine 202, and histidine 227.

Belongs to the diphthine synthase family. In terms of assembly, homodimer.

The catalysed reaction is 2-[(3S)-amino-3-carboxypropyl]-L-histidyl-[translation elongation factor 2] + 3 S-adenosyl-L-methionine = diphthine-[translation elongation factor 2] + 3 S-adenosyl-L-homocysteine + 3 H(+). The protein operates within protein modification; peptidyl-diphthamide biosynthesis. In terms of biological role, S-adenosyl-L-methionine-dependent methyltransferase that catalyzes the trimethylation of the amino group of the modified target histidine residue in translation elongation factor 2 (EF-2), to form an intermediate called diphthine. The three successive methylation reactions represent the second step of diphthamide biosynthesis. The protein is Diphthine synthase of Haloquadratum walsbyi (strain DSM 16790 / HBSQ001).